Reading from the N-terminus, the 475-residue chain is Aspartyl/glutamyl-tRNA(Asn/Gln) amidotransferase subunit B (475 aa).

This sequence belongs to the GatB/GatE family. GatB subfamily. As to quaternary structure, heterotrimer of A, B and C subunits.

It carries out the reaction L-glutamyl-tRNA(Gln) + L-glutamine + ATP + H2O = L-glutaminyl-tRNA(Gln) + L-glutamate + ADP + phosphate + H(+). It catalyses the reaction L-aspartyl-tRNA(Asn) + L-glutamine + ATP + H2O = L-asparaginyl-tRNA(Asn) + L-glutamate + ADP + phosphate + 2 H(+). Its function is as follows. Allows the formation of correctly charged Asn-tRNA(Asn) or Gln-tRNA(Gln) through the transamidation of misacylated Asp-tRNA(Asn) or Glu-tRNA(Gln) in organisms which lack either or both of asparaginyl-tRNA or glutaminyl-tRNA synthetases. The reaction takes place in the presence of glutamine and ATP through an activated phospho-Asp-tRNA(Asn) or phospho-Glu-tRNA(Gln). The chain is Aspartyl/glutamyl-tRNA(Asn/Gln) amidotransferase subunit B from Thermoanaerobacter pseudethanolicus (strain ATCC 33223 / 39E) (Clostridium thermohydrosulfuricum).